Reading from the N-terminus, the 175-residue chain is Type II restriction enzyme NgoBV (175 aa).

The enzyme catalyses Endonucleolytic cleavage of DNA to give specific double-stranded fragments with terminal 5'-phosphates.. Functionally, a P subtype restriction enzyme that recognizes the double-stranded sequence 5'-GGNNCC-3'; the cleavage site is unknown. This is Type II restriction enzyme NgoBV (ngoBVR) from Neisseria gonorrhoeae.